The sequence spans 197 residues: MNVYLYQPDGEQDNDVTFYMPHATNGVIVYLFKMGAEAAPDRTRLVSGYEAGRPIGLRLAVGACNDAFVLSCVRAPCVFRELFIHNRYTAPLGLAVVRAGRAAPEAWHVLSVHRRSEAKRTRHIRALRVHSNVGPDQCYPKALISLAGNVPASFLNTLQRCRAHHKDVAAMAMLCPDLRVDDSVVQFDGVQASIKLR.

This is an uncharacterized protein from Orgyia pseudotsugata multicapsid polyhedrosis virus (OpMNPV).